A 337-amino-acid chain; its full sequence is Protein-methionine-sulfoxide reductase catalytic subunit MsrP (337 aa).

The tat-type signal signal peptide spans 1–48; the sequence is MLIKIPSRSDCSESEVTSETLYLSRRRLLGASFAGLALASGLPRLGFA. Residues Asn94, 97 to 98, Cys152, Thr187, Asn237, Arg242, and 253 to 255 contribute to the Mo-molybdopterin site; these read YE and SIK.

It belongs to the MsrP family. In terms of assembly, heterodimer of a catalytic subunit (MsrP) and a heme-binding subunit (MsrQ). Requires Mo-molybdopterin as cofactor. Predicted to be exported by the Tat system. The position of the signal peptide cleavage has not been experimentally proven.

The protein resides in the periplasm. It catalyses the reaction L-methionyl-[protein] + a quinone + H2O = L-methionyl-(S)-S-oxide-[protein] + a quinol. It carries out the reaction L-methionyl-[protein] + a quinone + H2O = L-methionyl-(R)-S-oxide-[protein] + a quinol. Its function is as follows. Part of the MsrPQ system that repairs oxidized periplasmic proteins containing methionine sulfoxide residues (Met-O), using respiratory chain electrons. Thus protects these proteins from oxidative-stress damage caused by reactive species of oxygen and chlorine generated by the host defense mechanisms. MsrPQ is essential for the maintenance of envelope integrity under bleach stress, rescuing a wide series of structurally unrelated periplasmic proteins from methionine oxidation. The catalytic subunit MsrP is non-stereospecific, being able to reduce both (R-) and (S-) diastereoisomers of methionine sulfoxide. The polypeptide is Protein-methionine-sulfoxide reductase catalytic subunit MsrP (Pseudomonas aeruginosa (strain ATCC 15692 / DSM 22644 / CIP 104116 / JCM 14847 / LMG 12228 / 1C / PRS 101 / PAO1)).